The following is a 217-amino-acid chain: Thymidylate kinase (217 aa).

12–19 (GIDGSGKS) is an ATP binding site.

The protein belongs to the thymidylate kinase family.

It catalyses the reaction dTMP + ATP = dTDP + ADP. Phosphorylation of dTMP to form dTDP in both de novo and salvage pathways of dTTP synthesis. This chain is Thymidylate kinase, found in Cereibacter sphaeroides (strain ATCC 17023 / DSM 158 / JCM 6121 / CCUG 31486 / LMG 2827 / NBRC 12203 / NCIMB 8253 / ATH 2.4.1.) (Rhodobacter sphaeroides).